Consider the following 244-residue polypeptide: MGQKINPVGFRLGVTQEHRSRWFADPNRYPQLLQEDKKIRDYVRKNLSNAGIADIRVERKADQVELEIRTARPGVVVGRGGAGIDTLREGLQALLKDSSRQIRINVIEVERVDADAALLGEYIAQQLERRVAFRRCVRQAIQRAQRAGVQGIKIQVAGRLNGAEIARTEWTREGRVPLHTLRADIDYAYTTATTTYGILGIKVWVFRGEIIPGQEDAAPSNVGQPRRRNQQRRRQQFEDRSNEG.

A KH type-2 domain is found at 39-110 (IRDYVRKNLS…QIRINVIEVE (72 aa)). Residues 215–244 (EDAAPSNVGQPRRRNQQRRRQQFEDRSNEG) are disordered. Over residues 225 to 234 (PRRRNQQRRR) the composition is skewed to basic residues. A compositionally biased stretch (basic and acidic residues) spans 235-244 (QQFEDRSNEG).

This sequence belongs to the universal ribosomal protein uS3 family. Part of the 30S ribosomal subunit. Forms a tight complex with proteins S10 and S14.

Binds the lower part of the 30S subunit head. Binds mRNA in the 70S ribosome, positioning it for translation. The chain is Small ribosomal subunit protein uS3 from Synechococcus sp. (strain ATCC 27144 / PCC 6301 / SAUG 1402/1) (Anacystis nidulans).